Consider the following 968-residue polypeptide: RNA polymerase-associated protein RapA (968 aa).

Positions 164–334 constitute a Helicase ATP-binding domain; that stretch reads DVGRRHAPRV…FARLRLLDPN (171 aa). Residue 177–184 participates in ATP binding; it reads DEVGLGKT. Positions 280–283 match the DEAH box motif; that stretch reads DEAH. Residues 490–662 form the Helicase C-terminal domain; it reads RVEWLMGYLT…YLASPVQTEG (173 aa).

It belongs to the SNF2/RAD54 helicase family. RapA subfamily. As to quaternary structure, interacts with the RNAP. Has a higher affinity for the core RNAP than for the holoenzyme. Its ATPase activity is stimulated by binding to RNAP.

In terms of biological role, transcription regulator that activates transcription by stimulating RNA polymerase (RNAP) recycling in case of stress conditions such as supercoiled DNA or high salt concentrations. Probably acts by releasing the RNAP, when it is trapped or immobilized on tightly supercoiled DNA. Does not activate transcription on linear DNA. Probably not involved in DNA repair. This chain is RNA polymerase-associated protein RapA, found in Shigella sonnei (strain Ss046).